Reading from the N-terminus, the 274-residue chain is RNA polymerase sigma factor SigI4 (274 aa).

Positions 87–100 (EEYSVGLMAFNEAI) match the Polymerase core binding motif. The segment at residues 226-245 (LSELMGLVNVHRKTVERNRK) is a DNA-binding region (H-T-H motif).

Belongs to the sigma-70 factor family. SigI subfamily. As to quaternary structure, interacts with RsgI4.

The protein localises to the cytoplasm. Negatively regulated by the anti-sigma-I factor RsgI4. Binding of the polysaccharide substrate to RsgI4 may lead to the release and activation of SigI4. Sigma factors are initiation factors that promote the attachment of RNA polymerase to specific initiation sites and are then released. This sigma factor is involved in regulation of cellulosomal genes via an external polysaccharide-sensing mechanism. The chain is RNA polymerase sigma factor SigI4 from Acetivibrio thermocellus (strain ATCC 27405 / DSM 1237 / JCM 9322 / NBRC 103400 / NCIMB 10682 / NRRL B-4536 / VPI 7372) (Clostridium thermocellum).